The primary structure comprises 120 residues: Large ribosomal subunit protein bL19 (120 aa).

This sequence belongs to the bacterial ribosomal protein bL19 family.

This protein is located at the 30S-50S ribosomal subunit interface and may play a role in the structure and function of the aminoacyl-tRNA binding site. The chain is Large ribosomal subunit protein bL19 from Kocuria rhizophila (strain ATCC 9341 / DSM 348 / NBRC 103217 / DC2201).